The primary structure comprises 515 residues: MTKRALISVSDKRGIVDLARELKHLGWDIISTGGTRLALEEAGVVTVAIDDVTGFPEMMDGRVKTLHPLIHGGLLARRDIEHHLQAAKQNRIELIDLVVVNLYPFKETICRSDITYDVAVDMVDIGGPSLLRSAAKNHASVTVVVDPTDYPLVLGELASTGSTSYQTRQSLAAKAFRHTAAYDAVIADYFTRQAGETKPEKLTLTYDLKQSMRYGENPQQAADFYQRALPITYSIASAKQLNGKELSFNNIRDADAAIRIIRDFKERPTVVALKHMNPCGIGQADDIETAWDFAYAADPVSIFGGIVVLNREVDLATAEKLHAIFLELIIAPSYSKEALAVLTHKKKHLRILELPFAAQEASEIEAEYTGVLGGLLVQNQDVVTESPADWIVVTKRQPNEQEMAALAFAWKTIKYVKSNAIIIANDHMTLGVGPGQTNRIASVRIAIAQATGQLEGAVLASDAFFPFADSIEEIAAAGIKAIIQPGGSIRDSESIAAADQHGITMIFTGVRHFRH.

The region spanning 1–145 (MTKRALISVS…KNHASVTVVV (145 aa)) is the MGS-like domain.

The protein belongs to the PurH family.

The enzyme catalyses (6R)-10-formyltetrahydrofolate + 5-amino-1-(5-phospho-beta-D-ribosyl)imidazole-4-carboxamide = 5-formamido-1-(5-phospho-D-ribosyl)imidazole-4-carboxamide + (6S)-5,6,7,8-tetrahydrofolate. The catalysed reaction is IMP + H2O = 5-formamido-1-(5-phospho-D-ribosyl)imidazole-4-carboxamide. Its pathway is purine metabolism; IMP biosynthesis via de novo pathway; 5-formamido-1-(5-phospho-D-ribosyl)imidazole-4-carboxamide from 5-amino-1-(5-phospho-D-ribosyl)imidazole-4-carboxamide (10-formyl THF route): step 1/1. The protein operates within purine metabolism; IMP biosynthesis via de novo pathway; IMP from 5-formamido-1-(5-phospho-D-ribosyl)imidazole-4-carboxamide: step 1/1. The protein is Bifunctional purine biosynthesis protein PurH of Streptococcus equi subsp. zooepidemicus (strain H70).